Reading from the N-terminus, the 141-residue chain is ATP synthase epsilon chain (141 aa).

The protein belongs to the ATPase epsilon chain family. As to quaternary structure, F-type ATPases have 2 components, CF(1) - the catalytic core - and CF(0) - the membrane proton channel. CF(1) has five subunits: alpha(3), beta(3), gamma(1), delta(1), epsilon(1). CF(0) has three main subunits: a, b and c.

The protein localises to the cell inner membrane. Its function is as follows. Produces ATP from ADP in the presence of a proton gradient across the membrane. This chain is ATP synthase epsilon chain, found in Dechloromonas aromatica (strain RCB).